Consider the following 99-residue polypeptide: UPF0235 protein Cag_0319 (99 aa).

The protein belongs to the UPF0235 family.

This chain is UPF0235 protein Cag_0319, found in Chlorobium chlorochromatii (strain CaD3).